Reading from the N-terminus, the 774-residue chain is Cilium assembly protein DZIP1L (774 aa).

The C2H2-type zinc-finger motif lies at 166-189 (HTCHLCDKTFMNATFLRGHIQRRH). Positions 204–450 (LGEVLEELRA…RKVLAALRKN (247 aa)) form a coiled coil. 3 disordered regions span residues 415–435 (MPKA…ASLE), 515–674 (NKEV…ASSG), and 686–774 (KQLE…IPGW). A compositionally biased stretch (acidic residues) spans 421 to 433 (TEEDSSEEELEAS). S425 and S426 each carry phosphoserine. The span at 515–526 (NKEVSSRVKQRW) shows a compositional bias: basic and acidic residues. Residues 597-616 (GPSSTPVSPGSGLSSTPPFS) show a composition bias toward low complexity.

It belongs to the DZIP C2H2-type zinc-finger protein family. In terms of assembly, interacts with SEPTIN2.

It localises to the cytoplasm. It is found in the cytoskeleton. The protein localises to the cilium basal body. The protein resides in the microtubule organizing center. Its subcellular location is the centrosome. It localises to the centriole. In terms of biological role, involved in primary cilium formation. Probably acts as a transition zone protein required for localization of PKD1/PC1 and PKD2/PC2 to the ciliary membrane. The sequence is that of Cilium assembly protein DZIP1L from Mus musculus (Mouse).